Here is a 387-residue protein sequence, read N- to C-terminus: Muscleblind-like protein 1 (387 aa).

Thr6 is modified (phosphothreonine). C3H1-type zinc fingers lie at residues Trp13 to Lys41, Asn47 to Pro73, Thr178 to Asp206, and Asp214 to Ala240.

Belongs to the muscleblind family. In terms of assembly, interacts with DDX1 and YBX1. Interacts with HNRNPH1; the interaction in RNA-independent. Interacts with RBPMS; the interaction allows cooperative assembly of RNA-bound stable cell-specific alternative splicing regulatory complexes.

Its subcellular location is the nucleus. The protein localises to the cytoplasm. It is found in the cytoplasmic granule. Mediates pre-mRNA alternative splicing regulation. Acts either as activator or repressor of splicing on specific pre-mRNA targets. Inhibits cardiac troponin-T (TNNT2) pre-mRNA exon inclusion but induces insulin receptor (IR) pre-mRNA exon inclusion in muscle. Antagonizes the alternative splicing activity pattern of CELF proteins. Regulates the TNNT2 exon 5 skipping through competition with U2AF2. Inhibits the formation of the spliceosome A complex on intron 4 of TNNT2 pre-mRNA. Binds to the stem-loop structure within the polypyrimidine tract of TNNT2 intron 4 during spliceosome assembly. Binds to the 5'-YGCU(U/G)Y-3'consensus sequence. Binds to the IR RNA. Binds to expanded CUG repeat RNA, which folds into a hairpin structure containing GC base pairs and bulged, unpaired U residues. Together with RNA binding proteins RBPMS and RBFOX2, activates vascular smooth muscle cells alternative splicing events. Regulates NCOR2 alternative splicing. This chain is Muscleblind-like protein 1, found in Rattus norvegicus (Rat).